A 401-amino-acid chain; its full sequence is 1-deoxy-D-xylulose 5-phosphate reductoisomerase (401 aa).

Threonine 11, glycine 12, serine 13, isoleucine 14, arginine 38, asparagine 39, and asparagine 125 together coordinate NADPH. Lysine 126 contributes to the 1-deoxy-D-xylulose 5-phosphate binding site. Glutamate 127 contacts NADPH. Residue aspartate 151 coordinates Mn(2+). Positions 152, 153, 179, and 202 each coordinate 1-deoxy-D-xylulose 5-phosphate. Glutamate 153 serves as a coordination point for Mn(2+). Position 208 (glycine 208) interacts with NADPH. Serine 215, asparagine 220, lysine 221, and glutamate 224 together coordinate 1-deoxy-D-xylulose 5-phosphate. Glutamate 224 provides a ligand contact to Mn(2+).

The protein belongs to the DXR family. It depends on Mg(2+) as a cofactor. Mn(2+) serves as cofactor.

It carries out the reaction 2-C-methyl-D-erythritol 4-phosphate + NADP(+) = 1-deoxy-D-xylulose 5-phosphate + NADPH + H(+). It functions in the pathway isoprenoid biosynthesis; isopentenyl diphosphate biosynthesis via DXP pathway; isopentenyl diphosphate from 1-deoxy-D-xylulose 5-phosphate: step 1/6. Catalyzes the NADPH-dependent rearrangement and reduction of 1-deoxy-D-xylulose-5-phosphate (DXP) to 2-C-methyl-D-erythritol 4-phosphate (MEP). This Paraburkholderia phytofirmans (strain DSM 17436 / LMG 22146 / PsJN) (Burkholderia phytofirmans) protein is 1-deoxy-D-xylulose 5-phosphate reductoisomerase.